A 243-amino-acid polypeptide reads, in one-letter code: Transmembrane protein 174 (243 aa).

2 helical membrane passes run 40-60 (LLFS…MGWI) and 73-93 (LLGP…VCKF). Residues 205 to 229 (AGHDRPSSDADQLEGTQMGEEERVC) form a disordered region.

As to quaternary structure, interacts with SLC34A1; regulates SLC34A1 internalization by PTH and FGF23.

It is found in the endoplasmic reticulum membrane. Its subcellular location is the apical cell membrane. Its function is as follows. Regulator of plasma phosphate homeostasis. Decreases serum inorganic phosphate (Pi) uptake by regulating the sodium-phosphate cotransporter SLC34A1 trafficking by PTH and FGF23 in the kidney. This chain is Transmembrane protein 174 (Tmem174), found in Rattus norvegicus (Rat).